Reading from the N-terminus, the 75-residue chain is Brevinin-2HS2A (75 aa).

The signal sequence occupies residues 1-22 (MFTLKKPLLLLFFLGTISLSLC). A propeptide spanning residues 23–40 (QEERDADEEEGEMIEEEV) is cleaved from the precursor. A disulfide bridge connects residues C69 and C75.

The protein belongs to the frog skin active peptide (FSAP) family. Brevinin subfamily. Expressed by the skin glands.

The protein resides in the secreted. In terms of biological role, has antimicrobial activity against some Gram-positive bacteria and fungi but has no activity against a range of Gram-negative bacteria except P.faecalis. Has antimicrobial activity against the Gram-positive bacteria S.aureus ATCC 25923 (MIC=19 uM), B.licheniformis X39 (MIC=37.5 uM) and R.rhodochrous X15 (MIC=9.5 uM), is virtually inactive against E.faecium 091299 (MIC=150 uM) and S.carnosus KHS (MIC=150 uM) and inactive against E.faecalis 981. Active against the Gram-negative bacterium P.faecalis X29 (MIC=9.5 uM) and is inactive against E.coli, P.aeruginosa and S.typhi. Active against C.albicans ATCC 2002 (MIC=19 uM) and is also active against the slime mold 090223 (MIC=37.5 uM). Has extremely low hemolytic activity against human erythrocytes (LC(50)=300 uM). This is Brevinin-2HS2A from Odorrana hainanensis (Odor frog).